The primary structure comprises 61 residues: MARKALIEKAKRTPKFKVRAYTRCVRCGRARSVYRYFGLCRICLRELAHKGQLPGVKKASW.

Residues cysteine 24, cysteine 27, cysteine 40, and cysteine 43 each contribute to the Zn(2+) site.

This sequence belongs to the universal ribosomal protein uS14 family. Zinc-binding uS14 subfamily. In terms of assembly, part of the 30S ribosomal subunit. Contacts proteins S3 and S10. It depends on Zn(2+) as a cofactor.

Functionally, binds 16S rRNA, required for the assembly of 30S particles and may also be responsible for determining the conformation of the 16S rRNA at the A site. This is Small ribosomal subunit protein uS14 from Thermus aquaticus.